An 87-amino-acid polypeptide reads, in one-letter code: Mitotic-spindle organizing protein 1 (87 aa).

This sequence belongs to the MOZART1 family. In terms of assembly, part of the gamma-tubulin complex.

Its subcellular location is the cytoplasm. The protein resides in the cytoskeleton. It localises to the microtubule organizing center. It is found in the spindle pole body. Its function is as follows. Required for gamma-tubulin complex recruitment to the microtubule organizing center (MTOC). In Chaetomium globosum (strain ATCC 6205 / CBS 148.51 / DSM 1962 / NBRC 6347 / NRRL 1970) (Soil fungus), this protein is Mitotic-spindle organizing protein 1.